The sequence spans 319 residues: Lambda-crystallin homolog (319 aa).

Position 2 is an N-acetylalanine (alanine 2). A Phosphoserine modification is found at serine 3. NAD(+) is bound by residues 16–17, aspartate 36, glutamate 97, and lysine 102; that span reads LI.

Belongs to the 3-hydroxyacyl-CoA dehydrogenase family. In terms of assembly, homodimer.

It localises to the cytoplasm. The enzyme catalyses L-gulonate + NAD(+) = 3-dehydro-L-gulonate + NADH + H(+). With respect to regulation, inhibited by malonate. Its function is as follows. Has high L-gulonate 3-dehydrogenase activity. It also exhibits low dehydrogenase activity toward L-3-hydroxybutyrate (HBA) and L-threonate. This Rattus norvegicus (Rat) protein is Lambda-crystallin homolog (Cryl1).